The following is a 432-amino-acid chain: Type I restriction enzyme MjaIX specificity subunit (432 aa).

It belongs to the type-I restriction system S methylase family. In terms of assembly, the type I restriction/modification system is composed of three polypeptides R, M and S.

Functionally, the specificity (S) subunit of a type I restriction enzyme; this subunit dictates DNA sequence specificity. The M and S subunits together form a methyltransferase (MTase) that methylates A-3 on the top and A-2 on the bottom strand of the sequence 5'-CCAN(5)GTR-3'. In the presence of the R subunit the complex can also act as an endonuclease, binding to the same target sequence but cutting the DNA some distance from this site. Whether the DNA is cut or modified depends on the methylation state of the target sequence. When the target site is unmodified, the DNA is cut. When the target site is hemimethylated, the complex acts as a maintenance MTase modifying the DNA so that both strands become methylated. After locating a non-methylated recognition site, the enzyme complex serves as a molecular motor that translocates DNA in an ATP-dependent manner until a collision occurs that triggers cleavage. The chain is Type I restriction enzyme MjaIX specificity subunit (hsdS) from Methanocaldococcus jannaschii (strain ATCC 43067 / DSM 2661 / JAL-1 / JCM 10045 / NBRC 100440) (Methanococcus jannaschii).